The following is a 354-amino-acid chain: Lysophosphatidic acid receptor 3 (354 aa).

Over 1 to 31 (MNECHYDKRMDFFYNRSNTDTADEWTGTKLV) the chain is Extracellular. N-linked (GlcNAc...) asparagine glycosylation occurs at asparagine 15. Residues 32 to 52 (IVLCVGTFFCLFIFFSNSLVI) form a helical membrane-spanning segment. Over 53-67 (AAVITNRKFHFPFYY) the chain is Cytoplasmic. The chain crosses the membrane as a helical span at residues 68–88 (LLANLAAADFFAGIAYVFLMF). The Extracellular segment spans residues 89 to 101 (NTGPVSKTLTVNR). Residues 102–124 (WLLRQGLLDTSLTASLANLLVIA) traverse the membrane as a helical segment. Residues 125–146 (VERHMSIMRMRIHSNLTKKRVT) lie on the Cytoplasmic side of the membrane. The helical transmembrane segment at 147 to 167 (LLILLVWAIAIFMGAVPTLGW) threads the bilayer. At 168-186 (NCLCNISACSSLAPIYSRS) the chain is on the extracellular side. Asparagine 172 is a glycosylation site (N-linked (GlcNAc...) asparagine). The chain crosses the membrane as a helical span at residues 187-207 (YLIFWTVSNLLAFFIMVVVYV). The Cytoplasmic portion of the chain corresponds to 208 to 240 (RIYMYVKRKTNVLSPHTSGSISRRRAPMKLMKT). A helical membrane pass occupies residues 241-261 (VMTVLGAFVVCWTPGLVVLLL). The Extracellular portion of the chain corresponds to 262–276 (DGLNCKQCNVQHVKR). Residues 277–295 (WFLLLALLNSVMNPIIYSY) traverse the membrane as a helical segment. Over 296 to 354 (KDEDMYNTMRKMICCAPHDSNAERHPSRIPSTIHSRSDTGSQYLEDSISQGQVCNKSSS) the chain is Cytoplasmic. Cysteine 309 carries S-palmitoyl cysteine lipidation.

Belongs to the G-protein coupled receptor 1 family.

It is found in the cell membrane. Receptor for lysophosphatidic acid (LPA), a mediator of diverse cellular activities. Seems to be coupled to the G(i)/G(o) and G(q) families of heteromeric G proteins. This Rattus norvegicus (Rat) protein is Lysophosphatidic acid receptor 3 (Lpar3).